The primary structure comprises 2546 residues: Formin-J (2546 aa).

Disordered stretches follow at residues 1–40, 61–108, 188–270, 369–414, 502–541, 802–849, 879–898, 987–1101, 1485–1529, 1558–1601, 1659–1775, 1840–1869, and 2014–2033; these read MEENTNNIDNGHMGDNNNENNNNSNNNNNNNSNSSSSFVK, ENSN…PLSE, KNIT…PNSA, TTNN…SSSS, TNSFGSSTTTTISGGGSGSSSVNSSGGGSGTTPINVTPNS, SSIS…NTRK, TSVPTSPTSKNPLITSNNNN, TTNN…GGIG, PKSK…ASLS, KRSK…FKSP, INNI…KVNS, VPTTTTSTTTTTQTTPPPVTINEKEKETQS, and SNLSRKSSKSSNNSSTSSLE. Composition is skewed to low complexity over residues 16–37 and 62–98; these read NNNENNNNSNNNNNNNSNSSSS and NSNNSITSGGSSSNSGEISSNNNNNNNNNGILKNSTS. Polar residues-rich tracts occupy residues 99 to 108 and 188 to 198; these read GSKDNTPLSE and KNITPSKNNSP. Composition is skewed to low complexity over residues 203–237 and 247–270; these read NNNNNNNNNNNNNNNNNNNNNNNNNNNNNNNNNNN and NKNSIYNTNSNNNSNTTNSTPNSA. Over residues 377-389 the composition is skewed to polar residues; that stretch reads AESLTTYSESSEI. Low complexity-rich tracts occupy residues 390–414 and 502–513; these read STDSTGVCSSSSSTSSTLSSKSSSS and TNSFGSSTTTTI. The FHA domain maps to 391-444; it reads TDSTGVCSSSSSTSSTLSSKSSSSSSFNKFMEFLLIYIEDNDSTNGTWVNGNKL. A GBD/FH3 domain is found at 457–963; it reads KITLSTPDFS…SSISNEQEYQ (507 aa). 2 stretches are compositionally biased toward polar residues: residues 879–891 and 992–1007; these read TSVPTSPTSKNPL and SSAKNIEVDSSVNKSP. The segment covering 1033–1042 has biased composition (pro residues); that stretch reads VPPPPPPPPG. Over residues 1043–1056 the composition is skewed to low complexity; it reads GNNNNESDVPSSSG. The segment covering 1057 to 1097 has biased composition (pro residues); that stretch reads GPPPPPPPPPPPGKSSGGGPPPPPPPPPKGGKGGPPPPPPI. An FH1 domain is found at 1072-1098; the sequence is SGGGPPPPPPPPPKGGKGGPPPPPPIG. The FH2 domain maps to 1106 to 1495; that stretch reads KVKEEQPSVP…KSKKYQEQQN (390 aa). The span at 1492–1502 shows a compositional bias: polar residues; that stretch reads EQQNKPTQNND. Low complexity predominate over residues 1507–1529; that stretch reads SKLSNLPSSSSINDESSSSASLS. Positions 1563–1593 constitute a DAD domain; sequence EQEPVVEPIQITPKVGSAASAEPSPSIKSRD. The segment covering 1665 to 1679 has biased composition (low complexity); sequence SSSSSSSSSSSSSSS. Basic and acidic residues predominate over residues 1687-1717; that stretch reads HNTESEIKKEFISNSSMDKDKEKIKEKEKGT. Positions 1732 to 1745 are enriched in low complexity; the sequence is KSTTTSPSSSSSKK. Polar residues predominate over residues 1746-1757; sequence QIPSLSECLQES. Low complexity-rich tracts occupy residues 1763 to 1775 and 1841 to 1853; these read RSSSYSPNSKVNS and PTTTTSTTTTTQT. Residues 2067-2118 are a coiled coil; it reads IDDNQQKQQKQQQQQQQQQQQQQQLPQPQQQQQQQQQQQQQQQQQQQQQQQQ. Positions 2121–2154 are enriched in low complexity; sequence QQSTTTTTISTHHPQLKQVQPQSPSSLSQQPTQQ. 3 disordered regions span residues 2121 to 2369, 2381 to 2473, and 2485 to 2510; these read QQST…PKTV, SHKK…SYSS, and SPSSSITSCKPSPGAVSSTSSTLKTP. Residues 2160-2179 are compositionally biased toward polar residues; the sequence is QPSSPLQSHYKPQQKPQTTY. Composition is skewed to low complexity over residues 2188–2206 and 2237–2256; these read ANPFPSSTTSTNSSPSNAS and SSASSNSSSVSGSSQSTPLS. The span at 2274–2287 shows a compositional bias: polar residues; that stretch reads TPPSSSISNSTATT. Low complexity predominate over residues 2302–2315; sequence SPSSSSLEQSSNAS. Positions 2332–2342 are enriched in basic residues; it reads FKKHKKSHSKS. Composition is skewed to low complexity over residues 2388 to 2439, 2459 to 2473, and 2485 to 2497; these read VDQS…SSSS, NISSGNISNNTSYSS, and SPSSSITSCKPSP. Polar residues predominate over residues 2499–2508; the sequence is AVSSTSSTLK.

Belongs to the formin homology family. Diaphanous subfamily. In terms of assembly, interacts (via GBD/FH3 domain) with activated Rho-GTPases.

In terms of biological role, formins play an important role in the nucleation of actin and the formation of linear actin filaments. The chain is Formin-J (forJ) from Dictyostelium discoideum (Social amoeba).